The chain runs to 303 residues: DnaJ homolog subfamily C member 17 (303 aa).

One can recognise a J domain in the interval 11–76 (DLYALLGIEE…AARAAYDKVR (66 aa)). Basic and acidic residues-rich tracts occupy residues 78 to 106 (ARKQAAERTQRLDEKRKKVKLDLEARERQ) and 150 to 166 (IRQDREQRLRGRTENTE). Disordered regions lie at residues 78–124 (ARKQ…TTTL) and 150–170 (IRQDREQRLRGRTENTEGKGT). The region spanning 178-249 (KCKKEDESQG…NPLKVSWLEG (72 aa)) is the RRM domain. Lysine 264 bears the N6-methyllysine mark.

The protein localises to the cytoplasm. Its subcellular location is the nucleus. Functionally, may negatively affect PAX8-induced thyroglobulin/TG transcription. The protein is DnaJ homolog subfamily C member 17 (Dnajc17) of Rattus norvegicus (Rat).